We begin with the raw amino-acid sequence, 509 residues long: ATP synthase subunit alpha (509 aa).

Residue 171–178 participates in ATP binding; it reads GDRQTGKT.

It belongs to the ATPase alpha/beta chains family. F-type ATPases have 2 components, CF(1) - the catalytic core - and CF(0) - the membrane proton channel. CF(1) has five subunits: alpha(3), beta(3), gamma(1), delta(1), epsilon(1). CF(0) has three main subunits: a(1), b(2) and c(9-12). The alpha and beta chains form an alternating ring which encloses part of the gamma chain. CF(1) is attached to CF(0) by a central stalk formed by the gamma and epsilon chains, while a peripheral stalk is formed by the delta and b chains.

The protein resides in the cell inner membrane. The catalysed reaction is ATP + H2O + 4 H(+)(in) = ADP + phosphate + 5 H(+)(out). In terms of biological role, produces ATP from ADP in the presence of a proton gradient across the membrane. The alpha chain is a regulatory subunit. The chain is ATP synthase subunit alpha from Neorickettsia sennetsu (strain ATCC VR-367 / Miyayama) (Ehrlichia sennetsu).